Here is a 442-residue protein sequence, read N- to C-terminus: Urokinase-type plasminogen activator (442 aa).

An N-terminal signal peptide occupies residues 1-20 (MRVLRACLSLCVLVVSDSKG). The 37-residue stretch at 29 to 65 (GASNCGCLNGGKCVSYKYFSNIQRCSCPKKFQGEHCE) folds into the EGF-like domain. Cystine bridges form between C33–C41, C35–C53, C55–C64, C72–C153, C93–C135, C124–C148, C179–C310, C220–C236, C228–C299, C324–C393, C356–C372, and C383–C411. Residues 36-59 (LNGGKCVSYKYFSNIQRCSCPKKF) form a binds urokinase plasminogen activator surface receptor region. The 82-residue stretch at 72-153 (CFEGNGHSYR…LVQECMVPNC (82 aa)) folds into the Kringle domain. N-linked (GlcNAc...) asparagine glycosylation occurs at N152. The connecting peptide stretch occupies residues 154-189 (SGGESHRPAYDGKNPFSTPEKVEFQCGQKALRPRFK). One can recognise a Peptidase S1 domain in the interval 190–435 (IVGGKSTTIE…FLTWIHTHVG (246 aa)). Residues H235 and D286 each act as charge relay system in the active site. S387 functions as the Charge relay system in the catalytic mechanism.

This sequence belongs to the peptidase S1 family. In terms of assembly, found in high and low molecular mass forms. Each consists of two chains, A and B. The high molecular mass form contains a long chain A which is cleaved to yield a short chain A. Forms heterodimer with SERPINA5. Binds LRP1B; binding is followed by internalization and degradation. Interacts with MRC2. Interacts with PLAUR. In complex with SERPINE1, interacts with PLAUR/uPAR. Interacts with SORL1 and LRP1, either alone or in complex with SERPINE1; these interactions are abolished in the presence of LRPAP1/RAP. The ternary complex composed of PLAUR-PLAU-PAI1 also interacts with SORLA. Produced as an inactive single-chain protein (pro-uPA or sc-uPA), is processed into the active disulfide-linked two-chain form of PLAU/uPA by a proteolytic event mediated, at least, by TMPRSS4.

It is found in the secreted. The enzyme catalyses Specific cleavage of Arg-|-Val bond in plasminogen to form plasmin.. Its activity is regulated as follows. Inhibited by SERPINA5. Inhibited by SERPINE1. In terms of biological role, specifically cleaves the zymogen plasminogen to form the active enzyme plasmin. The polypeptide is Urokinase-type plasminogen activator (PLAU) (Sus scrofa (Pig)).